The primary structure comprises 101 residues: NADH-quinone oxidoreductase subunit K (101 aa).

3 helical membrane passes run 4 to 24 (LAHY…GIFL), 30 to 50 (IIIL…FVAF), and 61 to 81 (IFVF…LAIL).

It belongs to the complex I subunit 4L family. In terms of assembly, NDH-1 is composed of 14 different subunits. Subunits NuoA, H, J, K, L, M, N constitute the membrane sector of the complex.

It is found in the cell inner membrane. The enzyme catalyses a quinone + NADH + 5 H(+)(in) = a quinol + NAD(+) + 4 H(+)(out). NDH-1 shuttles electrons from NADH, via FMN and iron-sulfur (Fe-S) centers, to quinones in the respiratory chain. The immediate electron acceptor for the enzyme in this species is believed to be ubiquinone. Couples the redox reaction to proton translocation (for every two electrons transferred, four hydrogen ions are translocated across the cytoplasmic membrane), and thus conserves the redox energy in a proton gradient. This is NADH-quinone oxidoreductase subunit K from Paraburkholderia phymatum (strain DSM 17167 / CIP 108236 / LMG 21445 / STM815) (Burkholderia phymatum).